A 342-amino-acid chain; its full sequence is Protein RecA 1 (342 aa).

Gly68–Thr75 contributes to the ATP binding site.

This sequence belongs to the RecA family.

It localises to the cytoplasm. Functionally, can catalyze the hydrolysis of ATP in the presence of single-stranded DNA, the ATP-dependent uptake of single-stranded DNA by duplex DNA, and the ATP-dependent hybridization of homologous single-stranded DNAs. It interacts with LexA causing its activation and leading to its autocatalytic cleavage. The protein is Protein RecA 1 of Myxococcus xanthus.